Reading from the N-terminus, the 905-residue chain is Clumping factor B (905 aa).

Residues 1–44 (MKKRIDYLSNKQNKYSIRRFTVGTTSVIVGATILFGIGNHQAQA) form the signal peptide. The short motif at 15 to 26 (YSIRRFTVGTTS) is the YSIRK-G/S signaling motif element. Polar residues-rich tracts occupy residues 44–61 (ASEQ…NASA) and 68–101 (MIET…KPMS). The tract at residues 44–191 (ASEQSNDTTQ…AQGTSKPSVR (148 aa)) is disordered. Residues 45–542 (SEQSNDTTQS…GSADGDSAVN (498 aa)) are ligand binding A region. A compositionally biased stretch (low complexity) spans 102 to 119 (TQTSNTTTTEPASTNETP). The segment covering 134 to 189 (QDQTVPQEANSQVDNKTTNDANSIATNSELKNPQTLDLPQSSPQTISNAQGTSKPS) has biased composition (polar residues). The MIDAS-like motif motif lies at 272–276 (DYSNS). The tract at residues 530 to 877 (YGGGSADGDS…ETGDKSENTN (348 aa)) is disordered. Positions 545-555 (DPTPGPPVDPE) are enriched in pro residues. A compositionally biased stretch (acidic residues) spans 556–829 (PSPDPEPEPS…SDSDSDSDSD (274 aa)). Residues 833-844 (RVTPPNNEQKAP) are compositionally biased toward polar residues. A compositionally biased stretch (basic and acidic residues) spans 861–874 (HKTDALPETGDKSE). The LPXTG sorting signal signature appears at 866-870 (LPETG). Thr869 carries the pentaglycyl murein peptidoglycan amidated threonine modification. Positions 870 to 905 (GDKSENTNATLFGAMMALLGSLLLFRKRKQDHKEKA) are cleaved as a propeptide — removed by sortase.

It belongs to the serine-aspartate repeat-containing protein (SDr) family. Proteolytically cleaved by aureolysin (aur). This cleavage leads to the inactivation of ClfB.

The protein localises to the secreted. Its subcellular location is the cell wall. Functionally, cell surface-associated protein implicated in virulence by promoting bacterial attachment to both alpha- and beta-chains of human fibrinogen and inducing the formation of bacterial clumps. This is Clumping factor B (clfB) from Staphylococcus aureus (strain MSSA476).